Consider the following 236-residue polypeptide: Purine nucleoside phosphorylase DeoD-type (236 aa).

Histidine 5 is a binding site for a purine D-ribonucleoside. Residues glycine 21, arginine 25, arginine 44, and 88–91 each bind phosphate; that span reads RVGT. A purine D-ribonucleoside contacts are provided by residues 180–182 and 204–205; these read EME and SD. The Proton donor role is filled by aspartate 205.

It belongs to the PNP/UDP phosphorylase family. Homohexamer; trimer of homodimers.

The catalysed reaction is a purine D-ribonucleoside + phosphate = a purine nucleobase + alpha-D-ribose 1-phosphate. The enzyme catalyses a purine 2'-deoxy-D-ribonucleoside + phosphate = a purine nucleobase + 2-deoxy-alpha-D-ribose 1-phosphate. Catalyzes the reversible phosphorolytic breakdown of the N-glycosidic bond in the beta-(deoxy)ribonucleoside molecules, with the formation of the corresponding free purine bases and pentose-1-phosphate. The chain is Purine nucleoside phosphorylase DeoD-type from Shewanella loihica (strain ATCC BAA-1088 / PV-4).